Here is a 352-residue protein sequence, read N- to C-terminus: Ferrochelatase (352 aa).

The Fe cation site is built by histidine 222 and glutamate 303.

Belongs to the ferrochelatase family.

It localises to the cytoplasm. The enzyme catalyses heme b + 2 H(+) = protoporphyrin IX + Fe(2+). Its pathway is porphyrin-containing compound metabolism; protoheme biosynthesis; protoheme from protoporphyrin-IX: step 1/1. Functionally, catalyzes the ferrous insertion into protoporphyrin IX. This is Ferrochelatase from Brucella abortus (strain S19).